Here is a 252-residue protein sequence, read N- to C-terminus: Chitooligosaccharide deacetylase (252 aa).

His61 and His125 together coordinate Mg(2+).

Belongs to the YdjC deacetylase family. ChbG subfamily. Homodimer. Mg(2+) serves as cofactor.

It localises to the cytoplasm. The catalysed reaction is N,N'-diacetylchitobiose + H2O = N-acetyl-beta-D-glucosaminyl-(1-&gt;4)-D-glucosamine + acetate. The enzyme catalyses diacetylchitobiose-6'-phosphate + H2O = N'-monoacetylchitobiose-6'-phosphate + acetate. It participates in glycan degradation; chitin degradation. In terms of biological role, involved in the degradation of chitin. ChbG is essential for growth on the acetylated chitooligosaccharides chitobiose and chitotriose but is dispensable for growth on cellobiose and chitosan dimer, the deacetylated form of chitobiose. Deacetylation of chitobiose-6-P and chitotriose-6-P is necessary for both the activation of the chb promoter by the regulatory protein ChbR and the hydrolysis of phosphorylated beta-glucosides by the phospho-beta-glucosidase ChbF. Catalyzes the removal of only one acetyl group from chitobiose-6-P to yield monoacetylchitobiose-6-P, the inducer of ChbR and the substrate of ChbF. This chain is Chitooligosaccharide deacetylase, found in Escherichia coli O45:K1 (strain S88 / ExPEC).